A 662-amino-acid polypeptide reads, in one-letter code: Glycogen debranching enzyme (662 aa).

Asp338 (nucleophile) is an active-site residue. The active-site Proton donor is the Glu373.

The protein belongs to the glycosyl hydrolase 13 family.

The enzyme catalyses Hydrolysis of (1-&gt;6)-alpha-D-glucosidic linkages to branches with degrees of polymerization of three or four glucose residues in limit dextrin.. It participates in glycan degradation; glycogen degradation. Its function is as follows. Removes maltotriose and maltotetraose chains that are attached by 1,6-alpha-linkage to the limit dextrin main chain, generating a debranched limit dextrin. This chain is Glycogen debranching enzyme, found in Yersinia pestis.